Reading from the N-terminus, the 60-residue chain is MKGEKYTRFERARIVGARALQIFMGAPVLIRTDSIDPLEIALEEMRLGVIPITVKRDRKR.

The protein belongs to the archaeal Rpo6/eukaryotic RPB6 RNA polymerase subunit family. As to quaternary structure, part of the RNA polymerase complex.

The protein resides in the cytoplasm. The enzyme catalyses RNA(n) + a ribonucleoside 5'-triphosphate = RNA(n+1) + diphosphate. In terms of biological role, DNA-dependent RNA polymerase (RNAP) catalyzes the transcription of DNA into RNA using the four ribonucleoside triphosphates as substrates. This chain is DNA-directed RNA polymerase subunit Rpo6, found in Methanothrix thermoacetophila (strain DSM 6194 / JCM 14653 / NBRC 101360 / PT) (Methanosaeta thermophila).